A 349-amino-acid polypeptide reads, in one-letter code: GMP reductase (349 aa).

108–131 (IDFLKIKKIFLLSSELKYICIDVA) is an NADP(+) binding site. K(+) contacts are provided by G181 and G183. The active-site Thioimidate intermediate is the C186. Residue 216–239 (IISDGGCTVSGDIAKAFGGGADFV) participates in NADP(+) binding.

The protein belongs to the IMPDH/GMPR family. GuaC type 1 subfamily. Homotetramer.

The enzyme catalyses IMP + NH4(+) + NADP(+) = GMP + NADPH + 2 H(+). In terms of biological role, catalyzes the irreversible NADPH-dependent deamination of GMP to IMP. It functions in the conversion of nucleobase, nucleoside and nucleotide derivatives of G to A nucleotides, and in maintaining the intracellular balance of A and G nucleotides. The sequence is that of GMP reductase from Buchnera aphidicola subsp. Acyrthosiphon pisum (strain Tuc7).